A 71-amino-acid polypeptide reads, in one-letter code: Beta-defensin 10 (71 aa).

The N-terminal stretch at 1-23 (MKTLCSLLLIGCLLFSYDTPVVG) is a signal peptide. Disulfide bonds link C37–C66, C44–C59, and C49–C67.

Belongs to the beta-defensin family.

It localises to the secreted. Has antibacterial activity. This Rattus norvegicus (Rat) protein is Beta-defensin 10 (Defb10).